A 1095-amino-acid chain; its full sequence is 1-phosphatidylinositol 4,5-bisphosphate phosphodiesterase (1095 aa).

The 151-residue stretch at methionine 319–lysine 469 folds into the PI-PLC X-box domain. Catalysis depends on residues histidine 334 and histidine 381. Substrate contacts are provided by lysine 467 and lysine 469. The interval glutamate 487–glycine 529 is disordered. Positions alanine 500–alanine 523 are enriched in low complexity. In terms of domain architecture, PI-PLC Y-box spans leucine 550 to arginine 666. 2 residues coordinate substrate: serine 579 and arginine 606. The region spanning arginine 666–methionine 794 is the C2 domain. 2 disordered regions span residues isoleucine 842–glutamate 863 and glutamine 1000–lysine 1030. Composition is skewed to basic and acidic residues over residues aspartate 852–glutamate 863 and threonine 1007–lysine 1030.

Interacts with inaD. As to expression, abundantly expressed in the adult retina.

The catalysed reaction is a 1,2-diacyl-sn-glycero-3-phospho-(1D-myo-inositol-4,5-bisphosphate) + H2O = 1D-myo-inositol 1,4,5-trisphosphate + a 1,2-diacyl-sn-glycerol + H(+). Its function is as follows. The production of the second messenger molecules diacylglycerol (DAG) and inositol 1,4,5-trisphosphate (IP3) is mediated by activated phosphatidylinositol-specific phospholipase C enzymes. Essential component of the phototransduction pathway. Essential downstream component of a hh-signaling pathway which regulates the Duox-dependent gut immune response to bacterial uracil; required for the activation of Cad99C and consequently Cad99C-dependent endosome formation, which is essential for the Duox-dependent production of reactive oxygen species (ROS) in response to intestinal bacterial infection. The sequence is that of 1-phosphatidylinositol 4,5-bisphosphate phosphodiesterase from Drosophila melanogaster (Fruit fly).